Consider the following 73-residue polypeptide: U3-agatoxin-Ao1k (73 aa).

Residues 1–20 (MRTIISLLLLSAMVFAVIEA) form the signal peptide. Positions 21–34 (ISLEEGLQLFEGER) are excised as a propeptide. Cystine bridges form between C36-C52, C43-C57, C51-C67, and C59-C65. At S71 the chain carries Serine amide.

Belongs to the neurotoxin 07 (Beta/delta-agtx) family. 03 (aga-4) subfamily. Aga sub-subfamily. In terms of tissue distribution, expressed by the venom gland.

It is found in the secreted. Insecticidal neurotoxin that modulates the insect Nav channel (DmNaV1/tipE (para/tipE)) in a unique manner, with both the activation and inactivation processes being affected. The voltage dependence of activation is shifted toward more hyperpolarized potentials (analogous to site 4 toxins) and a non-inactivating persistent sodium current is induced (site 3-like action). Interestingly, both effects take place in a voltage-dependent manner, producing a bell-shaped curve between -80 and 0 mV. Compared to beta/delta-agatoxin-1 to -3, this toxin appears to affect the insect sodium channel only weakly. The chain is U3-agatoxin-Ao1k from Agelena orientalis (Funnel-web spider).